The sequence spans 385 residues: GDP-D-glucose phosphorylase 1 (385 aa).

The active-site Tele-GMP-histidine intermediate is the histidine 218.

It belongs to the GDPGP1 family.

The protein localises to the cytoplasm. The catalysed reaction is GDP-alpha-D-glucose + phosphate = alpha-D-glucose 1-phosphate + GDP + H(+). Specific and highly efficient GDP-D-glucose phosphorylase regulating the levels of GDP-D-glucose in cells. The sequence is that of GDP-D-glucose phosphorylase 1 (GDPGP1) from Homo sapiens (Human).